The primary structure comprises 192 residues: Pyruvate kinase (192 aa).

A substrate-binding site is contributed by arginine 41. K(+) contacts are provided by asparagine 43, serine 45, aspartate 75, and threonine 76. 43 to 46 (NFSH) contacts ATP.

It belongs to the pyruvate kinase family. Mg(2+) is required as a cofactor. K(+) serves as cofactor.

The enzyme catalyses pyruvate + ATP = phosphoenolpyruvate + ADP + H(+). Its pathway is carbohydrate degradation; glycolysis; pyruvate from D-glyceraldehyde 3-phosphate: step 5/5. This Spiroplasma citri protein is Pyruvate kinase (pyk).